The primary structure comprises 2375 residues: CCR4-NOT transcription complex subunit 1 (2375 aa).

3 short sequence motifs (LXXLL) span residues 153–157 (LPDLL), 181–185 (LHLLL), and 223–227 (LAPLL). Ser318 carries the phosphoserine modification. Residues 570-574 (LSMLL) carry the LXXLL motif. The interval 725–770 (SAAPHTQSMQGFPPNLGSAFSTPQSPAKAFPPLSTPNQTTAFSGIG) is disordered. The segment at 799 to 1014 (NNDPFVQRKL…QGSITTPGSI (216 aa)) is interaction with ZFP36. At Ser1060 the chain carries Phosphoserine. The tract at residues 1089–1604 (EPPENIQEKI…AQPMKQAWAT (516 aa)) is interaction with CNOT6, CNOT6L, CNOT7 and CNOT8. A compositionally biased stretch (basic and acidic residues) spans 1314 to 1326 (QLSAPKKDVKQPE). A disordered region spans residues 1314–1351 (QLSAPKKDVKQPEELPAITTTTTSTTPATSTTCTATVP). Residues 1332-1349 (TTTTTSTTPATSTTCTAT) are compositionally biased toward low complexity. 3 consecutive short sequence motifs (LXXLL) follow at residues 1638–1642 (LRSLL), 1941–1945 (LIALL), and 2095–2099 (LRVLL).

This sequence belongs to the CNOT1 family. Component of the CCR4-NOT complex; distinct complexes seem to exist that differ in the participation of probably mutually exclusive catalytic subunits. In the complex, interacts directly with CNOT6, CNOT6L, CNOT7 or CNOT8. Interacts in a ligand-dependent fashion with ESR1 and RXRA. Interacts with NANOS2, TOB1 and ZFP36. Interacts with TNRC6A, TNRC6B or TNRC6C; the interactions are direct. Interacts with YTHDF2; the interaction is direct and promotes recruitment of the CCR4-NOT complex to N6-methyladenosine (m6A)-containing mRNAs, leading to their deadenylation and subsequent degradation. Interacts with EIF4ENIF1/4E-T. Interacts in an RNA-independent manner with BICC1 (via KH domains). Interacts with TEX13A; the interaction may inhibit CNOT1 binding to mRNA and subsequently CNOT1-mediated mRNA degradation.

The protein localises to the cytoplasm. The protein resides in the P-body. It localises to the nucleus. Scaffolding component of the CCR4-NOT complex which is one of the major cellular mRNA deadenylases and is linked to various cellular processes including bulk mRNA degradation, miRNA-mediated repression, translational repression during translational initiation and general transcription regulation. Additional complex functions may be a consequence of its influence on mRNA expression. Its scaffolding function implies its interaction with the catalytic complex module and diverse RNA-binding proteins mediating the complex recruitment to selected mRNA 3'UTRs. Involved in degradation of AU-rich element (ARE)-containing mRNAs probably via association with ZFP36. Mediates the recruitment of the CCR4-NOT complex to miRNA targets and to the RISC complex via association with TNRC6A, TNRC6B or TNRC6C. Acts as a transcriptional repressor. Represses the ligand-dependent transcriptional activation by nuclear receptors. Involved in the maintenance of embryonic stem (ES) cell identity; prevents their differentiation towards extraembryonic trophectoderm lineages. Plays a role in rapid sperm motility via mediating timely mRNA turnover. The protein is CCR4-NOT transcription complex subunit 1 (Cnot1) of Mus musculus (Mouse).